The primary structure comprises 176 residues: ATP synthase subunit delta (176 aa).

It belongs to the ATPase delta chain family. F-type ATPases have 2 components, F(1) - the catalytic core - and F(0) - the membrane proton channel. F(1) has five subunits: alpha(3), beta(3), gamma(1), delta(1), epsilon(1). F(0) has three main subunits: a(1), b(2) and c(10-14). The alpha and beta chains form an alternating ring which encloses part of the gamma chain. F(1) is attached to F(0) by a central stalk formed by the gamma and epsilon chains, while a peripheral stalk is formed by the delta and b chains.

The protein localises to the cell inner membrane. Its function is as follows. F(1)F(0) ATP synthase produces ATP from ADP in the presence of a proton or sodium gradient. F-type ATPases consist of two structural domains, F(1) containing the extramembraneous catalytic core and F(0) containing the membrane proton channel, linked together by a central stalk and a peripheral stalk. During catalysis, ATP synthesis in the catalytic domain of F(1) is coupled via a rotary mechanism of the central stalk subunits to proton translocation. Functionally, this protein is part of the stalk that links CF(0) to CF(1). It either transmits conformational changes from CF(0) to CF(1) or is implicated in proton conduction. The chain is ATP synthase subunit delta from Campylobacter concisus (strain 13826).